The primary structure comprises 287 residues: D-apionate oxidoisomerase (287 aa).

Residues 13–15 (GKM), Glu36, and Asp71 each bind NAD(+). The Zn(2+) site is built by His116 and Glu186.

Belongs to the ApnO family. Zn(2+) serves as cofactor.

It carries out the reaction D-apionate + NAD(+) = 3-oxoisoapionate + NADH + H(+). The protein operates within carbohydrate metabolism. Its function is as follows. Involved in catabolism of D-apiose. Catalyzes the conversion of D-apionate to 3-oxo-isoapionate. This is D-apionate oxidoisomerase from Blautia hydrogenotrophica (strain DSM 10507 / JCM 14656 / S5a33) (Ruminococcus hydrogenotrophicus).